The following is a 226-amino-acid chain: RLA class II histocompatibility antigen, DP alpha-1 chain (226 aa).

Residues 1–189 (EHVSVFVIFA…PIQMPETTET (189 aa)) lie on the Extracellular side of the membrane. Residues Asn-75 and Asn-115 are each glycosylated (N-linked (GlcNAc...) asparagine). An Ig-like C1-type domain is found at 84–176 (PEVIVFPKEP…LDAPLLTHWE (93 aa)). An intrachain disulfide couples Cys-104 to Cys-160. A helical transmembrane segment spans residues 190–210 (VVCALGLVVGLAGVVVGIVLI). The Cytoplasmic segment spans residues 211 to 226 (TKALRSSPDPRARRPL).

It belongs to the MHC class II family.

The protein resides in the membrane. The polypeptide is RLA class II histocompatibility antigen, DP alpha-1 chain (Oryctolagus cuniculus (Rabbit)).